The sequence spans 146 residues: Large ribosomal subunit protein bL9 (146 aa).

The protein belongs to the bacterial ribosomal protein bL9 family.

Functionally, binds to the 23S rRNA. The sequence is that of Large ribosomal subunit protein bL9 from Deinococcus deserti (strain DSM 17065 / CIP 109153 / LMG 22923 / VCD115).